A 262-amino-acid polypeptide reads, in one-letter code: Adenosylcobinamide-GDP ribazoletransferase (262 aa).

6 consecutive transmembrane segments (helical) span residues 43 to 63, 66 to 86, 120 to 140, 146 to 166, 191 to 211, and 242 to 262; these read YFGL…WLTQ, LPAG…TGGF, GALA…ELAL, AGSA…SLIF, LFIL…IAAL, and AAQQ…GGIL.

Belongs to the CobS family. It depends on Mg(2+) as a cofactor.

It is found in the cell inner membrane. The enzyme catalyses alpha-ribazole + adenosylcob(III)inamide-GDP = adenosylcob(III)alamin + GMP + H(+). It catalyses the reaction alpha-ribazole 5'-phosphate + adenosylcob(III)inamide-GDP = adenosylcob(III)alamin 5'-phosphate + GMP + H(+). The protein operates within cofactor biosynthesis; adenosylcobalamin biosynthesis; adenosylcobalamin from cob(II)yrinate a,c-diamide: step 7/7. Its function is as follows. Joins adenosylcobinamide-GDP and alpha-ribazole to generate adenosylcobalamin (Ado-cobalamin). Also synthesizes adenosylcobalamin 5'-phosphate from adenosylcobinamide-GDP and alpha-ribazole 5'-phosphate. This chain is Adenosylcobinamide-GDP ribazoletransferase, found in Shewanella oneidensis (strain ATCC 700550 / JCM 31522 / CIP 106686 / LMG 19005 / NCIMB 14063 / MR-1).